The primary structure comprises 369 residues: Anhydro-N-acetylmuramic acid kinase (369 aa).

12 to 19 (GTSMDGVD) contacts ATP.

Belongs to the anhydro-N-acetylmuramic acid kinase family.

The catalysed reaction is 1,6-anhydro-N-acetyl-beta-muramate + ATP + H2O = N-acetyl-D-muramate 6-phosphate + ADP + H(+). It participates in amino-sugar metabolism; 1,6-anhydro-N-acetylmuramate degradation. Its pathway is cell wall biogenesis; peptidoglycan recycling. Its function is as follows. Catalyzes the specific phosphorylation of 1,6-anhydro-N-acetylmuramic acid (anhMurNAc) with the simultaneous cleavage of the 1,6-anhydro ring, generating MurNAc-6-P. Is required for the utilization of anhMurNAc either imported from the medium or derived from its own cell wall murein, and thus plays a role in cell wall recycling. This is Anhydro-N-acetylmuramic acid kinase from Shewanella woodyi (strain ATCC 51908 / MS32).